A 646-amino-acid polypeptide reads, in one-letter code: MAPAGLLQTSLIWVAYGVAVALVLLVSVITTLTWQTPHERSIAVSIVSIISLTALLATVFLLPVDIALVSSTASAHLGAKKDWATPGRVDGILLTLKIVYYTLYTLDALLCLIVIPFTYFWFEEYDEVEEEEGTSSAAARIWRALKYTLGFVFLVVILFLIGFFVPAAGNNPGKHMDLDYFKRLLAANNGEKALTFGVGLLITLGTLLYILYTSAGLALLPVSFIKSAPSISAPQLSATTASALEHNRELQRQLEMRNSGRPEGMSQKDRREMDALLREERTLVRRERLAAEARGDNRSKIYRAWTKVEAVFRPLKLLGGIFLLLLAILIWVSMLITGIDKAANSICKQHCGYILGHLNVFQPINWIFVQSAKAFPVDYILMALLVLLFFSSSITGLATIGIRFLWVRIFQLKKGRTAPQALLIATVLLGPHDPRHQLRGRHARGAAVRHLRHADLLRQPAAATRASSPTAASTATWCAPAPRPSASPAAIGRLHADRHVHLPQPRPPSNWPRLRRPSTSGPSSSSSPSSSSSSSPASSRTPRLNLSELDEEAEVDERGGPAGPAPAAALARPGAISPAAPRRTPPRRARRVMARRLGTRMGVGRARGVKLNGGAATENDKKEKKNGTWVWAWVWEWEWQTDWLAE.

5 helical membrane passes run 11-31, 42-62, 102-122, 149-169, and 193-213; these read LIWVAYGVAVALVLLVSVITT, IAVSIVSIISLTALLATVFLL, TLYTLDALLCLIVIPFTYFWF, LGFVFLVVILFLIGFFVPAAG, and ALTFGVGLLITLGTLLYILYT. An N-linked (GlcNAc...) asparagine glycan is attached at Asn-297. 2 helical membrane-spanning segments follow: residues 317–337 and 380–400; these read LLGGIFLLLLAILIWVSMLIT and ILMALLVLLFFSSSITGLATI. Disordered stretches follow at residues 459-588 and 603-623; these read QPAA…PPRR and VGRARGVKLNGGAATENDKKE. Low complexity-rich tracts occupy residues 460–490 and 517–543; these read PAAATRASSPTAASTATWCAPAPRPSASPAA and PSTSGPSSSSSPSSSSSSSPASSRTPR. An N-linked (GlcNAc...) asparagine glycan is attached at Asn-545. Over residues 565–582 the composition is skewed to low complexity; the sequence is APAAALARPGAISPAAPR. N-linked (GlcNAc...) asparagine glycosylation occurs at Asn-626.

The protein belongs to the LIMR family. LMBRD1 subfamily.

It localises to the lysosome membrane. Probable lysosomal cobalamin transporter. Required to export cobalamin from lysosomes allowing its conversion to cofactors. This Chaetomium globosum (strain ATCC 6205 / CBS 148.51 / DSM 1962 / NBRC 6347 / NRRL 1970) (Soil fungus) protein is Probable lysosomal cobalamin transporter.